The primary structure comprises 285 residues: MPRLSEVITALDALWPAERAESWDAVGTVVGEPDQEVSRVLFAVDPVQETVDEAVGLGADLLVTHHPLYLRGTTTVAASTFKGRVVHTLIKNDIALHVAHTNADTADPGVSDALAGALDLNVVRPLVPDPSDPEGRRGLGRVCELTHPLTVRELAARAAERLPATAQGIRVAGDPEATVRTVAVSGGSGDSLFDHVRAAGVDAFLTADLRHHPVSEARAHNPLALLDAAHWATEWPWCELGAAQLDEISDRHGWDLRVHVSKTVTDPWTAHVASAPTSSAMGAPN.

A divalent metal cation contacts are provided by His-65, His-66, Asp-104, His-230, and Glu-234.

It belongs to the GTP cyclohydrolase I type 2/NIF3 family. In terms of assembly, homohexamer.

The chain is GTP cyclohydrolase 1 type 2 homolog from Streptomyces coelicolor (strain ATCC BAA-471 / A3(2) / M145).